Consider the following 197-residue polypeptide: RNA polymerase II subunit A C-terminal domain phosphatase ssup-72 (197 aa).

At serine 39 the chain carries Phosphoserine.

The protein belongs to the SSU72 phosphatase family. May interact with synd-1 (via C-terminus); the interaction may prevent ssup-72 binding to RNA polymerase II ama-1. May interact with RNA polymerase II ama-1. In terms of processing, may be phosphorylated by kin-20. In terms of tissue distribution, expressed in epidermis, intestine and nervous system.

Its subcellular location is the nucleus. The catalysed reaction is O-phospho-L-seryl-[protein] + H2O = L-seryl-[protein] + phosphate. The enzyme catalyses O-phospho-L-threonyl-[protein] + H2O = L-threonyl-[protein] + phosphate. In terms of biological role, protein phosphatase that dephosphorylates 'Ser-5' of the heptad repeats YSPTSPS in the C-terminal domain of the large RNA polymerase II subunit ama-1. By regulating the phosphorylation status of ama-1 and thus ama-1 binding to specific polyadenylation sites, regulates alternative polyadenylation of pre-mRNAs, including unc-44 and dlk-1 mRNAs. This results in the tissue-specific expression of unc-44 isoforms. The polypeptide is RNA polymerase II subunit A C-terminal domain phosphatase ssup-72 (Caenorhabditis elegans).